The following is a 163-amino-acid chain: Large ribosomal subunit protein mL59 (163 aa).

The disordered stretch occupies residues 33 to 53; it reads PAGADPETHKTPYQEESPNPF.

This sequence belongs to the mitochondrion-specific ribosomal protein mL59 family. Component of the mitochondrial large ribosomal subunit (mt-LSU). Mature N.crassa 74S mitochondrial ribosomes consist of a small (37S) and a large (54S) subunit. The 37S small subunit contains a 16S ribosomal RNA (16S mt-rRNA) and 32 different proteins. The 54S large subunit contains a 23S rRNA (23S mt-rRNA) and 42 different proteins.

The protein resides in the mitochondrion. Functionally, component of the mitochondrial ribosome (mitoribosome), a dedicated translation machinery responsible for the synthesis of mitochondrial genome-encoded proteins, including at least some of the essential transmembrane subunits of the mitochondrial respiratory chain. The mitoribosomes are attached to the mitochondrial inner membrane and translation products are cotranslationally integrated into the membrane. In Neurospora crassa (strain ATCC 24698 / 74-OR23-1A / CBS 708.71 / DSM 1257 / FGSC 987), this protein is Large ribosomal subunit protein mL59 (mrpl25).